A 470-amino-acid chain; its full sequence is Cysteine--tRNA ligase (470 aa).

Zn(2+) is bound at residue C28. The short motif at 30 to 40 (PTVYNYIHIGN) is the 'HIGH' region element. Zn(2+)-binding residues include C212, H237, and E241. Positions 271 to 275 (KMSKS) match the 'KMSKS' region motif. Residue K274 participates in ATP binding.

The protein belongs to the class-I aminoacyl-tRNA synthetase family. Monomer. Zn(2+) serves as cofactor.

Its subcellular location is the cytoplasm. It carries out the reaction tRNA(Cys) + L-cysteine + ATP = L-cysteinyl-tRNA(Cys) + AMP + diphosphate. The protein is Cysteine--tRNA ligase of Pediococcus pentosaceus (strain ATCC 25745 / CCUG 21536 / LMG 10740 / 183-1w).